Reading from the N-terminus, the 263-residue chain is tRNA pseudouridine synthase A (263 aa).

Asp-53 functions as the Nucleophile in the catalytic mechanism. Residue Tyr-111 participates in substrate binding. Residues 232–263 form a disordered region; the sequence is TAPGHGLISGRSNMTNGKLENNKTTNPCVTKY. The segment covering 241-263 has biased composition (polar residues); that stretch reads GRSNMTNGKLENNKTTNPCVTKY.

The protein belongs to the tRNA pseudouridine synthase TruA family. In terms of assembly, homodimer.

The enzyme catalyses uridine(38/39/40) in tRNA = pseudouridine(38/39/40) in tRNA. Functionally, formation of pseudouridine at positions 38, 39 and 40 in the anticodon stem and loop of transfer RNAs. This is tRNA pseudouridine synthase A from Halalkalibacterium halodurans (strain ATCC BAA-125 / DSM 18197 / FERM 7344 / JCM 9153 / C-125) (Bacillus halodurans).